Reading from the N-terminus, the 159-residue chain is uncharacterized protein (159 aa).

This is an uncharacterized protein from Aquifex aeolicus (strain VF5).